We begin with the raw amino-acid sequence, 227 residues long: Cytochrome c oxidase subunit 2 (227 aa).

At 1–14 (MANHSQLGFQDASS) the chain is on the mitochondrial intermembrane side. Residues 15-45 (PIMEELVEFHDHALMVALAICSLVLYLLTLM) traverse the membrane as a helical segment. The Mitochondrial matrix portion of the chain corresponds to 46-58 (LMEKLSSNTVDAQ). The helical transmembrane segment at 59 to 86 (EVELIWTILPAIVLVLLALPSLQILYMM) threads the bilayer. Topologically, residues 87–227 (DEIDEPDLTL…FEAWSSLLSS (141 aa)) are mitochondrial intermembrane. Cu cation-binding residues include His160, Cys195, Glu197, Cys199, His203, and Met206. Residue Glu197 participates in Mg(2+) binding.

Belongs to the cytochrome c oxidase subunit 2 family. As to quaternary structure, component of the cytochrome c oxidase (complex IV, CIV), a multisubunit enzyme composed of 14 subunits. The complex is composed of a catalytic core of 3 subunits MT-CO1, MT-CO2 and MT-CO3, encoded in the mitochondrial DNA, and 11 supernumerary subunits COX4I, COX5A, COX5B, COX6A, COX6B, COX6C, COX7A, COX7B, COX7C, COX8 and NDUFA4, which are encoded in the nuclear genome. The complex exists as a monomer or a dimer and forms supercomplexes (SCs) in the inner mitochondrial membrane with NADH-ubiquinone oxidoreductase (complex I, CI) and ubiquinol-cytochrome c oxidoreductase (cytochrome b-c1 complex, complex III, CIII), resulting in different assemblies (supercomplex SCI(1)III(2)IV(1) and megacomplex MCI(2)III(2)IV(2)). Found in a complex with TMEM177, COA6, COX18, COX20, SCO1 and SCO2. Interacts with TMEM177 in a COX20-dependent manner. Interacts with COX20. Interacts with COX16. Cu cation serves as cofactor.

The protein resides in the mitochondrion inner membrane. It carries out the reaction 4 Fe(II)-[cytochrome c] + O2 + 8 H(+)(in) = 4 Fe(III)-[cytochrome c] + 2 H2O + 4 H(+)(out). Its function is as follows. Component of the cytochrome c oxidase, the last enzyme in the mitochondrial electron transport chain which drives oxidative phosphorylation. The respiratory chain contains 3 multisubunit complexes succinate dehydrogenase (complex II, CII), ubiquinol-cytochrome c oxidoreductase (cytochrome b-c1 complex, complex III, CIII) and cytochrome c oxidase (complex IV, CIV), that cooperate to transfer electrons derived from NADH and succinate to molecular oxygen, creating an electrochemical gradient over the inner membrane that drives transmembrane transport and the ATP synthase. Cytochrome c oxidase is the component of the respiratory chain that catalyzes the reduction of oxygen to water. Electrons originating from reduced cytochrome c in the intermembrane space (IMS) are transferred via the dinuclear copper A center (CU(A)) of subunit 2 and heme A of subunit 1 to the active site in subunit 1, a binuclear center (BNC) formed by heme A3 and copper B (CU(B)). The BNC reduces molecular oxygen to 2 water molecules using 4 electrons from cytochrome c in the IMS and 4 protons from the mitochondrial matrix. In Gallus gallus (Chicken), this protein is Cytochrome c oxidase subunit 2 (MT-CO2).